The chain runs to 137 residues: Histone H2B (137 aa).

A compositionally biased stretch (basic and acidic residues) spans 1–10 (MPPKAADKKP). A disordered region spans residues 1–45 (MPPKAADKKPASKAPATASKAPEKKDAGKKTAASGDKKKRTKTRK). 2 positions are modified to N6-acetyllysine; alternate: K8 and K9. Residues K8 and K9 each participate in a glycyl lysine isopeptide (Lys-Gly) (interchain with G-Cter in SUMO); alternate cross-link. Residue S12 is modified to Phosphoserine. At K13 the chain carries N6-acetyllysine. N6-acetyllysine; alternate is present on K24. K24 is covalently cross-linked (Glycyl lysine isopeptide (Lys-Gly) (interchain with G-Cter in SUMO); alternate). K25 participates in a covalent cross-link: Glycyl lysine isopeptide (Lys-Gly) (interchain with G-Cter in SUMO). A Glycyl lysine isopeptide (Lys-Gly) (interchain with G-Cter in ubiquitin) cross-link involves residue K131.

The protein belongs to the histone H2B family. In terms of assembly, the nucleosome is a histone octamer containing two molecules each of H2A, H2B, H3 and H4 assembled in one H3-H4 heterotetramer and two H2A-H2B heterodimers. The octamer wraps approximately 147 bp of DNA. Post-translationally, monoubiquitinated by the UBC2-BRE1 complex to form H2BK123ub1. H2BK123ub1 gives a specific tag for epigenetic transcriptional activation and is also prerequisite for H3K4me and H3K79me formation. H2BK123ub1 also modulates the formation of double-strand breaks during meiosis and is a prerequisite for DNA-damage checkpoint activation. In terms of processing, phosphorylated by STE20 to form H2BS10ph during progression through meiotic prophase. May be correlated with chromosome condensation. Acetylated by GCN5 to form H2BK11ac and H2BK16ac. H2BK16ac can also be formed by ESA1. Acetylation of N-terminal lysines and particularly formation of H2BK11acK16ac has a positive effect on transcription. Post-translationally, sumoylation to form H2BK6su or H2BK7su, and probably also H2BK16su or H2BK17su, occurs preferentially near the telomeres and represses gene transcription.

The protein resides in the nucleus. The protein localises to the chromosome. Its function is as follows. Core component of nucleosome. Nucleosomes wrap and compact DNA into chromatin, limiting DNA accessibility to the cellular machineries which require DNA as a template. Histones thereby play a central role in transcription regulation, DNA repair, DNA replication and chromosomal stability. DNA accessibility is regulated via a complex set of post-translational modifications of histones, also called histone code, and nucleosome remodeling. This Pyricularia oryzae (strain Y34) (Rice blast fungus) protein is Histone H2B (HTB1).